The chain runs to 388 residues: F-box/LRR-repeat protein At3g59190 (388 aa).

The 54-residue stretch at 11 to 64 (KDIISNLPDALLCHVLSFLPTTEAASTSVLAKRWRFLLAFVPNLDLDNMIYDRP) folds into the F-box domain. 5 LRR repeats span residues 151 to 177 (KVSG…HLSA), 180 to 205 (FGDE…VMIK), 228 to 252 (CENI…EFTD), 313 to 345 (TMYL…TVET), and 346 to 371 (DERV…IFEV).

The protein is F-box/LRR-repeat protein At3g59190 of Arabidopsis thaliana (Mouse-ear cress).